A 155-amino-acid chain; its full sequence is Small ribosomal subunit protein uS7 (155 aa).

This sequence belongs to the universal ribosomal protein uS7 family. As to quaternary structure, part of the 30S ribosomal subunit. Contacts proteins S9 and S11.

Its function is as follows. One of the primary rRNA binding proteins, it binds directly to 16S rRNA where it nucleates assembly of the head domain of the 30S subunit. Is located at the subunit interface close to the decoding center, probably blocks exit of the E-site tRNA. The sequence is that of Small ribosomal subunit protein uS7 from Corynebacterium glutamicum (strain R).